A 235-amino-acid chain; its full sequence is MGRAFEYRRASKEARWDKMSKLFPKLSKAITVAAKEGGIDPDMNPKLRTAIATAKAQNMPKDNIDAAIKRANGKDSSDIKTIFYDGKAAHGVQIIVETATDNPTRTVANVKSIFSKNGGEMLPSGSLNFMFSRKAIFEVVKPSGDIEELELELIDAGLTDIEENDGTLTIYGDYTSFGTLSEGIEKMGLEVKKGSLQFIPNSTVNLDESAIGELERLLDKLEDDDDVQAVYTNIE.

It belongs to the TACO1 family.

Its subcellular location is the cytoplasm. The protein is Probable transcriptional regulatory protein CFF8240_0424 of Campylobacter fetus subsp. fetus (strain 82-40).